Here is a 294-residue protein sequence, read N- to C-terminus: Aquaporin NIP2-2 (294 aa).

The next 2 membrane-spanning stretches (helical) occupy residues 54–74 (VISEVVATFLLVFVTCGAASI) and 88–108 (SVAGGLIVTVMIYATGHISGA). Positions 111–113 (NPA) match the NPA 1 motif. 3 helical membrane passes run 129-151 (VPFYWAAQFTGAMCAAFVLKAVL), 169-189 (ALLIEIVVTFNMMFVTCAVAT), and 197-217 (LAGLAVGSAVCITSIFAGPVS). Positions 222–224 (NPA) match the NPA 2 motif. A helical transmembrane segment spans residues 235–255 (VFTGLWIYFLGPVIGTLSGAW).

This sequence belongs to the MIP/aquaporin (TC 1.A.8) family. NIP (TC 1.A.8.12) subfamily.

The protein resides in the membrane. Aquaporins facilitate the transport of water and small neutral solutes across cell membranes. In Zea mays (Maize), this protein is Aquaporin NIP2-2 (NIP2-2).